Consider the following 437-residue polypeptide: Proline--tRNA ligase (437 aa).

It belongs to the class-II aminoacyl-tRNA synthetase family. ProS type 2 subfamily. In terms of assembly, homodimer.

It localises to the cytoplasm. It catalyses the reaction tRNA(Pro) + L-proline + ATP = L-prolyl-tRNA(Pro) + AMP + diphosphate. Its function is as follows. Catalyzes the attachment of proline to tRNA(Pro) in a two-step reaction: proline is first activated by ATP to form Pro-AMP and then transferred to the acceptor end of tRNA(Pro). The protein is Proline--tRNA ligase of Rhizorhabdus wittichii (strain DSM 6014 / CCUG 31198 / JCM 15750 / NBRC 105917 / EY 4224 / RW1) (Sphingomonas wittichii).